A 420-amino-acid chain; its full sequence is MKTLIARHKAGEHIGICSVCSAHPLVIEAALAFDRNSTRKVLIEATSNQVNQFGGYTGMTPADFREFVFTIADKVGFARERIILGGDHLGPNCWQQENADAAMEKSVELVKAYVRAGFSKIHLDASMSCAGDTIPLAPETVAERAAVLCFAAESVATDCQREQLSYVIGTEVPVPGGEASAIQSVHITHVEDAANTLRTHQKAFIARGLTEALTRVIAIVVQPGVEFDHSNIIHYQPQEAQALAQWIENTRMVYEAHSTDYQTRTAYWELVRDHFAILKVGPALTFALREAIFALAQIEQELIAPENRSGCLAVIEEVMLDEPQYWKKYYRTGFNDSLLDIRYSLSDRIRYYWPHSRIKNSVETMMVNLQGVDIPLGMISQYLPKQFERIQSGELSAMPHQLIMNKIYDVLRAYRYGCAE.

This sequence belongs to the GatZ/KbaZ family. GatZ subfamily. As to quaternary structure, forms a complex with GatY.

It functions in the pathway carbohydrate metabolism; D-tagatose 6-phosphate degradation; D-glyceraldehyde 3-phosphate and glycerone phosphate from D-tagatose 6-phosphate: step 2/2. In terms of biological role, component of the tagatose-1,6-bisphosphate aldolase GatYZ that is required for full activity and stability of the Y subunit. Could have a chaperone-like function for the proper and stable folding of GatY. When expressed alone, GatZ does not show any aldolase activity. Is involved in the catabolism of galactitol. In Shigella flexneri serotype 5b (strain 8401), this protein is D-tagatose-1,6-bisphosphate aldolase subunit GatZ.